A 263-amino-acid polypeptide reads, in one-letter code: Proline rich transmembrane protein 1B (263 aa).

Residues 1 to 17 (MEAGAGGAGSDTKGGGS) are compositionally biased toward gly residues. The interval 1–107 (MEAGAGGAGS…IGFVGEPPPY (107 aa)) is disordered. Low complexity-rich tracts occupy residues 37 to 47 (QMPAQPALPQL) and 75 to 86 (DAPAQAAGEAGP). A run of 2 helical transmembrane segments spans residues 190 to 210 (MMES…IAIV) and 238 to 258 (VLFS…YVVV).

It belongs to the CD225/Dispanin family.

It is found in the membrane. This chain is Proline rich transmembrane protein 1B, found in Homo sapiens (Human).